The sequence spans 249 residues: Mediator of RNA polymerase II transcription subunit 8 (249 aa).

Positions 154–200 (LEEREMGIQNVVTGLRRQLEDEDEEASESEEEVEEEEMEVVGVRRRS) form a coiled coil. The segment at 170-249 (RQLEDEDEEA…MTTGIPPTQR (80 aa)) is disordered. Residues 173–192 (EDEDEEASESEEEVEEEEME) show a composition bias toward acidic residues. Residues 211 to 232 (AAPAPGSRQQQQQQKAAGPAVP) are compositionally biased toward low complexity.

It belongs to the Mediator complex subunit 8 family. In terms of assembly, component of the Mediator complex.

It is found in the nucleus. Component of the Mediator complex, a coactivator involved in the regulated transcription of nearly all RNA polymerase II-dependent genes. Mediator functions as a bridge to convey information from gene-specific regulatory proteins to the basal RNA polymerase II transcription machinery. Mediator is recruited to promoters by direct interactions with regulatory proteins and serves as a scaffold for the assembly of a functional preinitiation complex with RNA polymerase II and the general transcription factors. The sequence is that of Mediator of RNA polymerase II transcription subunit 8 (med8) from Aspergillus fumigatus (strain ATCC MYA-4609 / CBS 101355 / FGSC A1100 / Af293) (Neosartorya fumigata).